Consider the following 181-residue polypeptide: ADP-ribosylation factor 1 (181 aa).

Gly-2 carries the N-myristoyl glycine lipid modification. GTP is bound by residues 24–31, 67–71, and 126–129; these read GLDAAGKT, DVGGQ, and NKQD.

It belongs to the small GTPase superfamily. Arf family.

It is found in the golgi apparatus. The enzyme catalyses GTP + H2O = GDP + phosphate + H(+). Functionally, GTP-binding protein involved in protein trafficking; may modulate vesicle budding and uncoating within the Golgi apparatus. The polypeptide is ADP-ribosylation factor 1 (ARF1) (Daucus carota (Wild carrot)).